A 388-amino-acid chain; its full sequence is MMSPSQASLLFLNVCIFICGEAVQGNCVHHSTDSSVVNIVEDGSNAKDESKSNDTVCKEDCEESCDVKTKITREEKHFMCRNLQNSIVSYTRSTKKLLRNMMDEQQASLDYLSNQVNELMNRVLLLTTEVFRKQLDPFPHRPVQSHGLDCTDIKDTIGSVTKTPSGLYIIHPEGSSYPFEVMCDMDYRGGGRTVIQKRIDGIIDFQRLWCDYLDGFGDLLGEFWLGLKKIFYIVNQKNTSFMLYVALESEDDTLAYASYDNFWLEDETRFFKMHLGRYSGNAGDAFRGLKKEDNQNAMPFSTSDVDNDGCRPACLVNGQSVKSCSHLHNKTGWWFNECGLANLNGIHHFSGKLLATGIQWGTWTKNNSPVKIKSVSMKIRRMYNPYFK.

The first 25 residues, Met1 to Gly25, serve as a signal peptide directing secretion. A glycan (N-linked (GlcNAc...) asparagine) is linked at Asn53. A coiled-coil region spans residues Leu98–Val123. Residues Arg141 to Tyr383 enclose the Fibrinogen C-terminal domain. N-linked (GlcNAc...) asparagine glycosylation occurs at Asn238. Disulfide bonds link Cys310-Cys314 and Cys324-Cys338. Asn329 carries an N-linked (GlcNAc...) asparagine glycan.

Mainly expressed in adult heart.

It is found in the secreted. The polypeptide is Angiopoietin-related protein 5 (ANGPTL5) (Homo sapiens (Human)).